Here is a 423-residue protein sequence, read N- to C-terminus: Ferrochelatase, mitochondrial (423 aa).

Residues 1-54 (MRSLGANMAAALRAAGVLLRDPLVSSSWRVYQPWRWKSVAAAAAATTETAQHAQ) constitute a mitochondrion transit peptide. Position 57 is an N6-acetyllysine (Lys57). The protoporphyrin IX site is built by Arg115, Tyr123, and Ser130. At Lys138 the chain carries N6-succinyllysine. Cys196 lines the [2Fe-2S] cluster pocket. Residues His230 and Asp383 contribute to the active site. Residues Cys403, Cys406, and Cys411 each coordinate [2Fe-2S] cluster. Lys415 carries the N6-acetyllysine; alternate modification. At Lys415 the chain carries N6-succinyllysine; alternate.

This sequence belongs to the ferrochelatase family. As to quaternary structure, homodimer. Homotetramer. Interaction with PGRMC1; the interaction results in decreased FECH activity. Interacts with ABCB10 and SLC25A37; this interaction forms an oligomeric complex. Forms a complex with ABCB7 and ABCB10, where a dimeric FECH bridges ABCB7 and ABCB10 homodimers; this complex may be required for cellular iron homeostasis, mitochondrial function and heme biosynthesis. Interacts with ABCB7 and ABCB10. [2Fe-2S] cluster is required as a cofactor.

The protein localises to the mitochondrion inner membrane. It carries out the reaction heme b + 2 H(+) = protoporphyrin IX + Fe(2+). Its pathway is porphyrin-containing compound metabolism; protoheme biosynthesis; protoheme from protoporphyrin-IX: step 1/1. In terms of biological role, catalyzes the ferrous insertion into protoporphyrin IX and participates in the terminal step in the heme biosynthetic pathway. The protein is Ferrochelatase, mitochondrial of Pan troglodytes (Chimpanzee).